A 259-amino-acid chain; its full sequence is Isoprenyl transferase (259 aa).

Asp-30 is a catalytic residue. Position 30 (Asp-30) interacts with Mg(2+). Residues 31-34, Trp-35, Arg-43, His-47, and 75-77 contribute to the substrate site; these read GNGR and STE. The active-site Proton acceptor is Asn-78. Residues Trp-79, Arg-81, Arg-198, and 204-206 each bind substrate; that span reads RIS. Glu-217 lines the Mg(2+) pocket.

This sequence belongs to the UPP synthase family. Homodimer. Requires Mg(2+) as cofactor.

Functionally, catalyzes the condensation of isopentenyl diphosphate (IPP) with allylic pyrophosphates generating different type of terpenoids. This Caulobacter vibrioides (strain ATCC 19089 / CIP 103742 / CB 15) (Caulobacter crescentus) protein is Isoprenyl transferase.